The chain runs to 188 residues: Elongation factor P (188 aa).

The protein belongs to the elongation factor P family.

Its subcellular location is the cytoplasm. Its pathway is protein biosynthesis; polypeptide chain elongation. Its function is as follows. Involved in peptide bond synthesis. Stimulates efficient translation and peptide-bond synthesis on native or reconstituted 70S ribosomes in vitro. Probably functions indirectly by altering the affinity of the ribosome for aminoacyl-tRNA, thus increasing their reactivity as acceptors for peptidyl transferase. This chain is Elongation factor P, found in Acidiphilium cryptum (strain JF-5).